The sequence spans 485 residues: N-succinylglutamate 5-semialdehyde dehydrogenase (485 aa).

Residue 220 to 225 participates in NAD(+) binding; the sequence is GSANTG. Active-site residues include Glu243 and Cys278.

This sequence belongs to the aldehyde dehydrogenase family. AstD subfamily.

The enzyme catalyses N-succinyl-L-glutamate 5-semialdehyde + NAD(+) + H2O = N-succinyl-L-glutamate + NADH + 2 H(+). Its pathway is amino-acid degradation; L-arginine degradation via AST pathway; L-glutamate and succinate from L-arginine: step 4/5. Functionally, catalyzes the NAD-dependent reduction of succinylglutamate semialdehyde into succinylglutamate. The sequence is that of N-succinylglutamate 5-semialdehyde dehydrogenase from Vibrio parahaemolyticus serotype O3:K6 (strain RIMD 2210633).